The primary structure comprises 128 residues: Small ribosomal subunit protein uS12 (128 aa).

The interval 1-24 (MPTFNQLVKYGREKRKKKSKAPAL) is disordered. 3-methylthioaspartic acid is present on Asp-89. The tract at residues 105–128 (AGVEGRRQSRSKYGTKRPKEEKGG) is disordered.

The protein belongs to the universal ribosomal protein uS12 family. As to quaternary structure, part of the 30S ribosomal subunit. Contacts proteins S8 and S17. May interact with IF1 in the 30S initiation complex.

Its function is as follows. With S4 and S5 plays an important role in translational accuracy. Interacts with and stabilizes bases of the 16S rRNA that are involved in tRNA selection in the A site and with the mRNA backbone. Located at the interface of the 30S and 50S subunits, it traverses the body of the 30S subunit contacting proteins on the other side and probably holding the rRNA structure together. The combined cluster of proteins S8, S12 and S17 appears to hold together the shoulder and platform of the 30S subunit. This is Small ribosomal subunit protein uS12 from Aquifex aeolicus (strain VF5).